The sequence spans 393 residues: 5-amino-6-(D-ribitylamino)uracil--L-tyrosine 4-hydroxyphenyl transferase (393 aa).

A Radical SAM core domain is found at 67-322 (VTYVINRNIN…GQWIVNHQPS (256 aa)). Positions 81, 85, and 88 each coordinate [4Fe-4S] cluster.

The protein belongs to the radical SAM superfamily. CofH family. Consists of two subunits, CofG and CofH. [4Fe-4S] cluster serves as cofactor.

It carries out the reaction 5-amino-6-(D-ribitylamino)uracil + L-tyrosine + S-adenosyl-L-methionine = 5-amino-5-(4-hydroxybenzyl)-6-(D-ribitylimino)-5,6-dihydrouracil + 2-iminoacetate + 5'-deoxyadenosine + L-methionine + H(+). Its pathway is cofactor biosynthesis; coenzyme F0 biosynthesis. In terms of biological role, catalyzes the radical-mediated synthesis of 5-amino-5-(4-hydroxybenzyl)-6-(D-ribitylimino)-5,6-dihydrouracil from 5-amino-6-(D-ribitylamino)uracil and L-tyrosine. The chain is 5-amino-6-(D-ribitylamino)uracil--L-tyrosine 4-hydroxyphenyl transferase from Thermosynechococcus vestitus (strain NIES-2133 / IAM M-273 / BP-1).